We begin with the raw amino-acid sequence, 355 residues long: Guanine nucleotide-binding protein subunit alpha-14 (355 aa).

The 322-residue stretch at 34-355 (RELKLLLLGT…QLNLREFNLV (322 aa)) folds into the G-alpha domain. Residues 37–50 (KLLLLGTGESGKST) are G1 motif. GTP is bound by residues 42-49 (GTGESGKS), 176-182 (LRVRVPT), 201-205 (DVGGQ), 270-273 (NKKD), and A327. Residue S49 participates in Mg(2+) binding. The segment at 174–182 (DVLRVRVPT) is G2 motif. R179 carries the ADP-ribosylarginine; by cholera toxin modification. T182 contacts Mg(2+). The tract at residues 197 to 206 (FRMVDVGGQR) is G3 motif. Residues 266–273 (ILFLNKKD) form a G4 motif region. The tract at residues 325–330 (TCATDT) is G5 motif.

Belongs to the G-alpha family. G(q) subfamily. G proteins are composed of 3 units; alpha, beta and gamma. The alpha chain contains the guanine nucleotide binding site.

In terms of biological role, guanine nucleotide-binding proteins (G proteins) are involved as modulators or transducers in various transmembrane signaling systems. The polypeptide is Guanine nucleotide-binding protein subunit alpha-14 (GNA14) (Homo sapiens (Human)).